A 381-amino-acid chain; its full sequence is Alcohol dehydrogenase class-3 (381 aa).

Residue Cys-49 coordinates Zn(2+). His-50 lines the NAD(+) pocket. Residues Thr-51 and His-71 each contribute to the an alcohol site. The Zn(2+) site is built by His-71, Glu-72, Cys-101, Cys-104, Cys-107, Cys-115, and Cys-179. NAD(+) contacts are provided by residues 204-209 (GLGTVG), Asp-228, Lys-233, Ile-274, 297-299 (VGV), 322-324 (TAF), and Arg-374.

This sequence belongs to the zinc-containing alcohol dehydrogenase family. Class-III subfamily. As to quaternary structure, homodimer. It depends on Zn(2+) as a cofactor. In terms of tissue distribution, expressed at low levels in the leaves.

The protein resides in the cytoplasm. It carries out the reaction a primary alcohol + NAD(+) = an aldehyde + NADH + H(+). It catalyses the reaction a secondary alcohol + NAD(+) = a ketone + NADH + H(+). The catalysed reaction is S-(hydroxymethyl)glutathione + NADP(+) = S-formylglutathione + NADPH + H(+). The enzyme catalyses S-(hydroxymethyl)glutathione + NAD(+) = S-formylglutathione + NADH + H(+). In Zea mays (Maize), this protein is Alcohol dehydrogenase class-3 (FDH).